Reading from the N-terminus, the 82-residue chain is Beta-neurotoxin Css9 (82 aa).

A signal peptide spans 1-17 (MKLLMLIVALMIIGVQS). The LCN-type CS-alpha/beta domain occupies 18–81 (KDGYPMDHKG…VWDRATNKCR (64 aa)). Intrachain disulfides connect C28–C80, C32–C54, C39–C61, and C43–C63.

It belongs to the long (4 C-C) scorpion toxin superfamily. Sodium channel inhibitor family. Beta subfamily. In terms of tissue distribution, expressed by the venom gland.

Its subcellular location is the secreted. Beta toxins bind voltage-independently at site-4 of sodium channels (Nav) and shift the voltage of activation toward more negative potentials thereby affecting sodium channel activation and promoting spontaneous and repetitive firing. This toxin compete with high affinity with 125I-Css4 bound on rat brain synaptosome and may bind with high affinity to Nav1.1/SCN1A, Nav1.2/SCN2A and Nav1.6/SCN8A. The protein is Beta-neurotoxin Css9 of Centruroides suffusus (Durango bark scorpion).